Consider the following 109-residue polypeptide: MFGKGGMGNLMKQAQMMQEKMAKMQEEIARMEMVGESGAGLVKVTMTGAHTVRKVEIDPSLMEDDKEMLEDLIAAACNDAARRIEENQKAKMAEVTGGMQLPPGMKMPF.

Belongs to the YbaB/EbfC family. In terms of assembly, homodimer.

The protein resides in the cytoplasm. It localises to the nucleoid. Binds to DNA and alters its conformation. May be involved in regulation of gene expression, nucleoid organization and DNA protection. This is Nucleoid-associated protein Sputw3181_1707 from Shewanella sp. (strain W3-18-1).